The sequence spans 597 residues: Intrastrand cross-link recognition protein (597 aa).

Residues 1–28 show a composition bias toward polar residues; sequence MNTGISPKQDDASNSNLLNIGQDHSLQY. 4 disordered regions span residues 1–134, 174–212, 259–291, and 327–364; these read MNTG…NVNA, QTNP…LAAS, SAGN…QQQM, and HLQQ…PKRP. The segment covering 32–42 has biased composition (basic and acidic residues); that stretch reads EHNDSQYRDAS. Low complexity-rich tracts occupy residues 52–134, 178–212, 260–271, 281–291, and 327–337; these read QFQA…NVNA, SVTG…LAAS, AGNAAGNANTAT, QPQLTHHQQQM, and HLQQQQQQQQH. The span at 351 to 361 shows a compositional bias: basic residues; that stretch reads ERRKQLKKQGP. DNA-binding regions (HMG box) lie at residues 361 to 429 and 434 to 502; these read PKRP…DAYE and PKRP…PDEN. Residue serine 532 is modified to Phosphoserine. Composition is skewed to low complexity over residues 543–556 and 564–580; these read SVTG…NPNT and LQQQ…QQQQ. Positions 543-597 are disordered; sequence SVTGSNSNSTNPNTPVSPPISLQQQPLQQQQQQQQQQQHMLLADPTTNGSIIKNE. Residues 587–597 show a composition bias toward polar residues; it reads PTTNGSIIKNE.

The protein resides in the nucleus. Binds to platinated DNA and confers sensitivity to the anticancer drug cisplatin. Activate the expression of the COX5B gene. In Saccharomyces cerevisiae (strain ATCC 204508 / S288c) (Baker's yeast), this protein is Intrastrand cross-link recognition protein (IXR1).